Consider the following 80-residue polypeptide: Cell division activator CedA (80 aa).

It belongs to the CedA family.

In terms of biological role, activates the cell division inhibited by chromosomal DNA over-replication. The sequence is that of Cell division activator CedA from Salmonella typhimurium (strain LT2 / SGSC1412 / ATCC 700720).